A 194-amino-acid polypeptide reads, in one-letter code: Adenylate kinase isoenzyme 1 (194 aa).

M1 bears the N-acetylmethionine mark. Residue 18–23 participates in ATP binding; it reads GSGKGT. The residue at position 38 (S38) is a Phosphoserine. The tract at residues 38 to 67 is NMP; it reads STGDLLRAEVSSGSARGKKLSEIMEKGQLV. AMP is bound by residues T39, R44, 65–67, 94–97, and Q101; these read QLV and GYPR. The LID stretch occupies residues 131–141; it reads KRGETSGRVDD. ATP is bound at residue R132. R138 and R149 together coordinate AMP. Residue G177 participates in ATP binding.

This sequence belongs to the adenylate kinase family. AK1 subfamily. In terms of assembly, monomer. Requires Mg(2+) as cofactor.

The protein localises to the cytoplasm. The enzyme catalyses a ribonucleoside 5'-phosphate + ATP = a ribonucleoside 5'-diphosphate + ADP. It carries out the reaction AMP + ATP = 2 ADP. The catalysed reaction is dAMP + ATP = dADP + ADP. It catalyses the reaction dATP + AMP = dADP + ADP. The enzyme catalyses dAMP + dATP = 2 dADP. It carries out the reaction a 2'-deoxyribonucleoside 5'-diphosphate + ATP = a 2'-deoxyribonucleoside 5'-triphosphate + ADP. The catalysed reaction is a ribonucleoside 5'-diphosphate + ATP = a ribonucleoside 5'-triphosphate + ADP. It catalyses the reaction CDP + GTP = CTP + GDP. The enzyme catalyses GDP + ATP = GTP + ADP. It carries out the reaction UDP + ATP = UTP + ADP. The catalysed reaction is GTP + UDP = UTP + GDP. It catalyses the reaction dTDP + GTP = dTTP + GDP. The enzyme catalyses dCDP + GTP = dCTP + GDP. It carries out the reaction dGDP + ATP = dGTP + ADP. The catalysed reaction is dADP + GTP = dATP + GDP. It catalyses the reaction thiamine diphosphate + ADP = thiamine triphosphate + AMP. Catalyzes the reversible transfer of the terminal phosphate group between ATP and AMP. Also displays broad nucleoside diphosphate kinase activity. Plays an important role in cellular energy homeostasis and in adenine nucleotide metabolism. Also catalyzes at a very low rate the synthesis of thiamine triphosphate (ThTP) from thiamine diphosphate (ThDP) and ADP. This is Adenylate kinase isoenzyme 1 from Oryctolagus cuniculus (Rabbit).